Reading from the N-terminus, the 682-residue chain is MATAALLRSIRRREVVSSPFSAYRCLSSSGKASLNSSYLGQNFRSFSRAFSSKPAGNDVIGIDLGTTNSCVAVMEGKNPKVIENAEGARTTPSVVAFNTKGELLVGTPAKRQAVTNPTNTVSGTKRLIGRKFDDPQTQKEMKMVPYKIVRAPNGDAWVEANGQQYSPSQIGAFILTKMKETAEAYLGKSVTKAVVTVPAYFNDAQRQATKDAGRIAGLDVERIINEPTAAALSYGMTNKEGLIAVFDLGGGTFDVSVLEISNGVFEVKATNGDTFLGGEDFDNALLDFLVNEFKTTEGIDLAKDRLALQRLREAAEKAKIELSSTSQTEINLPFITADASGAKHFNITLTRSRFETLVNHLIERTRDPCKNCLKDAGISAKEVDEVLLVGGMTRVPKVQSIVAEIFGKSPSKGVNPDEAVAMGAALQGGILRGDVKELLLLDVTPLSLGIETLGGVFTRLITRNTTIPTKKSQVFSTAADNQTQVGIRVLQGEREMATDNKLLGEFDLVGIPPSPRGVPQIEVTFDIDANGIVTVSAKDKTTGKVQQITIRSSGGLSEDDIQKMVREAELHAQKDKERKELIDTKNTADTTIYSIEKSLGEYREKIPSEIAKEIEDAVADLRSASSGDDLNEIKAKIEAANKAVSKIGEHMSGGSGGGSAPGGGSEGGSDQAPEAEYEEVKK.

A mitochondrion-targeting transit peptide spans 1–50; sequence MATAALLRSIRRREVVSSPFSAYRCLSSSGKASLNSSYLGQNFRSFSRAF. The tract at residues 646–682 is disordered; that stretch reads KIGEHMSGGSGGGSAPGGGSEGGSDQAPEAEYEEVKK. Over residues 651–667 the composition is skewed to gly residues; that stretch reads MSGGSGGGSAPGGGSEG. Residues 673–682 are compositionally biased toward acidic residues; it reads PEAEYEEVKK.

The protein belongs to the heat shock protein 70 (TC 1.A.33) family. DnaK subfamily.

Its subcellular location is the mitochondrion. Chaperone involved in the maturation of iron-sulfur [Fe-S] cluster-containing proteins. Has a low intrinsic ATPase activity which is markedly stimulated by HSCB and ISU1. In cooperation with other chaperones, Hsp70s are key components that facilitate folding of de novo synthesized proteins, assist translocation of precursor proteins into organelles, and are responsible for degradation of damaged protein under stress conditions. This is Heat shock 70 kDa protein 10, mitochondrial from Arabidopsis thaliana (Mouse-ear cress).